Reading from the N-terminus, the 399-residue chain is S-adenosylmethionine synthase (399 aa).

H17 lines the ATP pocket. Mg(2+) is bound at residue D19. K(+) is bound at residue E45. L-methionine-binding residues include E58 and Q101. Residues Q101–Q111 are flexible loop. Residues D177–K179, R244–F245, D253, R259–K260, A276, and K280 each bind ATP. D253 is an L-methionine binding site. An L-methionine-binding site is contributed by K284.

Belongs to the AdoMet synthase family. Homotetramer; dimer of dimers. Mg(2+) serves as cofactor. It depends on K(+) as a cofactor.

The protein resides in the cytoplasm. It catalyses the reaction L-methionine + ATP + H2O = S-adenosyl-L-methionine + phosphate + diphosphate. It functions in the pathway amino-acid biosynthesis; S-adenosyl-L-methionine biosynthesis; S-adenosyl-L-methionine from L-methionine: step 1/1. Its function is as follows. Catalyzes the formation of S-adenosylmethionine (AdoMet) from methionine and ATP. The overall synthetic reaction is composed of two sequential steps, AdoMet formation and the subsequent tripolyphosphate hydrolysis which occurs prior to release of AdoMet from the enzyme. This is S-adenosylmethionine synthase from Bacillus anthracis (strain A0248).